The chain runs to 231 residues: Probable calcium-binding protein CML21 (231 aa).

EF-hand domains lie at 54–89, 90–125, 145–180, and 181–216; these read DGLR…LEIS, FDEE…VYLL, PTFE…SGER, and SSGR…WVGI. 5 residues coordinate Ca(2+): D67, D69, N71, S73, and E78. The Ca(2+) site is built by D158, N160, D162, Y164, E169, D194, D196, N198, M200, and E205.

Its function is as follows. Potential calcium sensor. The polypeptide is Probable calcium-binding protein CML21 (CML21) (Arabidopsis thaliana (Mouse-ear cress)).